A 145-amino-acid chain; its full sequence is D-aminoacyl-tRNA deacylase (145 aa).

Positions 137–138 (GP) match the Gly-cisPro motif, important for rejection of L-amino acids motif.

It belongs to the DTD family. Homodimer.

Its subcellular location is the cytoplasm. The catalysed reaction is glycyl-tRNA(Ala) + H2O = tRNA(Ala) + glycine + H(+). It catalyses the reaction a D-aminoacyl-tRNA + H2O = a tRNA + a D-alpha-amino acid + H(+). In terms of biological role, an aminoacyl-tRNA editing enzyme that deacylates mischarged D-aminoacyl-tRNAs. Also deacylates mischarged glycyl-tRNA(Ala), protecting cells against glycine mischarging by AlaRS. Acts via tRNA-based rather than protein-based catalysis; rejects L-amino acids rather than detecting D-amino acids in the active site. By recycling D-aminoacyl-tRNA to D-amino acids and free tRNA molecules, this enzyme counteracts the toxicity associated with the formation of D-aminoacyl-tRNA entities in vivo and helps enforce protein L-homochirality. This is D-aminoacyl-tRNA deacylase from Salmonella paratyphi A (strain AKU_12601).